The sequence spans 1497 residues: Collagen alpha-2(V) chain (1497 aa).

The first 26 residues, 1-26, serve as a signal peptide directing secretion; sequence MMANWVGARPLLILSVLLGYCVSIKA. In terms of domain architecture, VWFC spans 38 to 96; that stretch reads IACTQHGQMYLNRDIWKPSPCQICVCDNGAILCDKIECPEVLNCANPITPTGECCPVCP. The interval 103–1265 is disordered; sequence TSFGRGRKGQ…PDDTNKTDPG (1163 aa). Residues 141 to 143 carry the Cell attachment site motif; the sequence is RGD. Residues 155–164 are compositionally biased toward low complexity; the sequence is PQGIDGEPGV. Residues 168 to 180 are compositionally biased toward pro residues; that stretch reads PGAPGPPGHPSHP. Residues 210 to 225 are compositionally biased toward low complexity; the sequence is PGSVGPVGPRGPQGLQ. Residues 234–246 are compositionally biased toward pro residues; that stretch reads AGPPGEPGEPGPM. Pro-288, Pro-291, and Pro-294 each carry 4-hydroxyproline. Composition is skewed to low complexity over residues 320 to 338 and 425 to 441; these read EAGPTGPMGAMGPLGPRGM and TPGAKGPTGSAGTSGPP. The short motif at 504-506 is the Cell attachment site element; it reads RGD. The segment covering 550–559 has biased composition (gly residues); it reads GPKGGQGDPG. A compositionally biased stretch (low complexity) spans 602–611; that stretch reads SIGIRGQPGS. 4-hydroxyproline occurs at positions 609 and 615. Positions 708–719 are enriched in basic and acidic residues; the sequence is RGERGNPGERGE. Positions 730–739 are enriched in gly residues; the sequence is GMAGGHGPDG. Over residues 744–756 the composition is skewed to low complexity; sequence PGPTGTIGDTGPP. The segment covering 774-785 has biased composition (basic and acidic residues); that stretch reads KGDRGGIGEKGA. Composition is skewed to low complexity over residues 824–839 and 878–891; these read PPGSRGNPGSRGENGP and LAGSPGPHGPHGVP. Residues 892-901 show a composition bias toward gly residues; it reads GLKGGRGTQG. Positions 917-927 are enriched in pro residues; that stretch reads PPGPAGAPGPA. 3 consecutive short sequence motifs (cell attachment site) follow at residues 942–944, 1065–1067, and 1068–1070; these read RGD. A compositionally biased stretch (basic and acidic residues) spans 1061 to 1070; it reads AVGERGDRGD. The span at 1091 to 1112 shows a compositional bias: low complexity; that stretch reads APGDAGQRGEPGSRGPVGPPGR. Short sequence motifs (cell attachment site) lie at residues 1125–1127 and 1134–1136; these read RGD. Residues 1125 to 1139 show a composition bias toward basic and acidic residues; it reads RGDKGDNGDRGDRGQ. 2 stretches are compositionally biased toward pro residues: residues 1169–1179 and 1209–1224; these read PFGPRGPPGPV and EGPPGEPGPPGPPGPP. Residues 1228-1497 constitute a propeptide, C-terminal propeptide; sequence TAALGDIMGH…GLDIGPVCFM (270 aa). The N-linked (GlcNAc...) asparagine glycan is linked to Asn-1260. Positions 1264 to 1497 constitute a Fibrillar collagen NC1 domain; it reads PGIHVTLKSL…GLDIGPVCFM (234 aa). 3 cysteine pairs are disulfide-bonded: Cys-1294–Cys-1326, Cys-1334–Cys-1495, and Cys-1403–Cys-1448. Ca(2+)-binding residues include Asp-1312, Asn-1314, Gln-1315, and Asp-1320. A glycan (N-linked (GlcNAc...) asparagine) is linked at Asn-1398.

Belongs to the fibrillar collagen family. As to quaternary structure, trimers of two alpha 1(V) and one alpha 2(V) chains expressed in most tissues and trimers of one alpha 1(V), one alpha 2(V), and one alpha 3(V) chains with a more limited distribution of expression. In terms of processing, prolines at the third position of the tripeptide repeating unit (G-X-P) are hydroxylated in some or all of the chains. Probably 3-hydroxylated on prolines by LEPREL1. Post-translationally, hydroxylation on proline residues within the sequence motif, GXPG, is most likely to be 4-hydroxy as this fits the requirement for 4-hydroxylation in vertebrates.

The protein resides in the secreted. It is found in the extracellular space. It localises to the extracellular matrix. Type V collagen is a member of group I collagen (fibrillar forming collagen). It is a minor connective tissue component of nearly ubiquitous distribution. Type V collagen binds to DNA, heparan sulfate, thrombospondin, heparin, and insulin. Type V collagen is a key determinant in the assembly of tissue-specific matrices. The sequence is that of Collagen alpha-2(V) chain from Mus musculus (Mouse).